The following is a 332-amino-acid chain: D-glutamate N-acetyltransferase (332 aa).

The protein belongs to the N-acetyltransferase DgcN family.

It carries out the reaction D-glutamate + acetyl-CoA = N-acetyl-D-glutamate + CoA + H(+). The catalysed reaction is D-aspartate + acetyl-CoA = N-acetyl-D-aspartate + CoA + H(+). It catalyses the reaction D-glutamine + acetyl-CoA = N-acetyl-D-glutamine + CoA + H(+). It participates in amino-acid degradation. N-acetyltransferase involved in a deamination-independent D-glutamate degradation pathway, named the DgcN-DgcA pathway. Catalyzes the transfer of the acetyl moiety from acetyl-CoA to D-glutamate to generate N-acetyl-D-glutamate. Can also acetylate D-aspartate and D-glutamine, with lower efficiency. Has low activity with D-asparagine. Cannot use succinyl-CoA. This is D-glutamate N-acetyltransferase from Pseudoalteromonas sp.